The primary structure comprises 35 residues: Sorbin and SH3 domain-containing protein 1 (35 aa).

The 8-residue stretch at 1–8 folds into the SoHo domain; sequence LNRDDDSD. Phosphoserine is present on S15. Residues 22-35 form the SH3 domain; that stretch reads CDDGWFVGTSRRTK.

Interacts with the long isoform of AFDN and with VCL. AFDN and VCL bind to SORBS1 in a competitive manner and do not form a ternary complex. Interacts with ABL1, CBL, CBLB and INPPL1/SHIP2 through the third SH3 domain. Interaction with ABL1 occurs only after insulin stimulation while this has no effect on the interaction with INPPL1. Interacts with the insulin receptor but dissociates from it following insulin stimulation. Also interacts with SCA7, PTK2/FAK1 and flotillin. Interacts (via SH3 domain 2) with PXN. Interacts (via third SH3 domain) with the Ten-1 ICD form of TENM1; the interaction induces the translocation of SORBS1 to the nucleus. In terms of processing, O-glycosylated.

The protein localises to the cell junction. It is found in the adherens junction. Its subcellular location is the cell membrane. It localises to the cytoplasm. The protein resides in the cytoskeleton. The protein localises to the focal adhesion. It is found in the nucleus. Its subcellular location is the nucleus matrix. In terms of biological role, plays a role in tyrosine phosphorylation of CBL by linking CBL to the insulin receptor. Required for insulin-stimulated glucose transport. Involved in formation of actin stress fibers and focal adhesions. This chain is Sorbin and SH3 domain-containing protein 1, found in Rattus norvegicus (Rat).